The sequence spans 160 residues: Cytochrome b6-f complex subunit 4 (160 aa).

Transmembrane regions (helical) follow at residues 36–56, 95–115, and 131–151; these read LLYIFPVVILGTIACNVGLAV, LLGVLLMVSVPAGLLTVPFLE, and TVFLIGTAVALWLGIGATLPI.

Belongs to the cytochrome b family. PetD subfamily. In terms of assembly, the 4 large subunits of the cytochrome b6-f complex are cytochrome b6, subunit IV (17 kDa polypeptide, petD), cytochrome f and the Rieske protein, while the 4 small subunits are petG, petL, petM and petN. The complex functions as a dimer.

It localises to the plastid. The protein resides in the chloroplast thylakoid membrane. In terms of biological role, component of the cytochrome b6-f complex, which mediates electron transfer between photosystem II (PSII) and photosystem I (PSI), cyclic electron flow around PSI, and state transitions. The protein is Cytochrome b6-f complex subunit 4 of Solanum bulbocastanum (Wild potato).